The following is a 139-amino-acid chain: SPbeta prophage-derived uncharacterized protein YomN (139 aa).

The sequence is that of SPbeta prophage-derived uncharacterized protein YomN (yomN) from Bacillus subtilis (strain 168).